Here is a 269-residue protein sequence, read N- to C-terminus: tRNA pseudouridine synthase A (269 aa).

The active-site Nucleophile is D51. Y109 contributes to the substrate binding site.

The protein belongs to the tRNA pseudouridine synthase TruA family. As to quaternary structure, homodimer.

The enzyme catalyses uridine(38/39/40) in tRNA = pseudouridine(38/39/40) in tRNA. In terms of biological role, formation of pseudouridine at positions 38, 39 and 40 in the anticodon stem and loop of transfer RNAs. The polypeptide is tRNA pseudouridine synthase A (Histophilus somni (strain 2336) (Haemophilus somnus)).